Reading from the N-terminus, the 371-residue chain is F-box protein At2g41170 (371 aa).

The 47-residue stretch at 56–102 (KMSLLDLPDLTLDCILEKLSPSELCAMTSVCSELRDKCVSDHLWEKH) folds into the F-box domain.

This is F-box protein At2g41170 from Arabidopsis thaliana (Mouse-ear cress).